A 122-amino-acid chain; its full sequence is UPF0145 protein BceJ2315_57450 (122 aa).

It belongs to the UPF0145 family.

This Burkholderia cenocepacia (strain ATCC BAA-245 / DSM 16553 / LMG 16656 / NCTC 13227 / J2315 / CF5610) (Burkholderia cepacia (strain J2315)) protein is UPF0145 protein BceJ2315_57450.